The primary structure comprises 369 residues: Maltose/maltodextrin import ATP-binding protein MalK (369 aa).

The region spanning 4–234 is the ABC transporter domain; that stretch reads VQLRNVTKAW…PADRFVAGFI (231 aa). 36-43 lines the ATP pocket; sequence GPSGCGKS.

It belongs to the ABC transporter superfamily. Maltooligosaccharide importer (TC 3.A.1.1.1) family. In terms of assembly, the complex is composed of two ATP-binding proteins (MalK), two transmembrane proteins (MalG and MalK) and a solute-binding protein (MalE).

Its subcellular location is the cell inner membrane. The enzyme catalyses D-maltose(out) + ATP + H2O = D-maltose(in) + ADP + phosphate + H(+). Its function is as follows. Part of the ABC transporter complex MalEFGK involved in maltose/maltodextrin import. Responsible for energy coupling to the transport system. The sequence is that of Maltose/maltodextrin import ATP-binding protein MalK from Salmonella typhi.